We begin with the raw amino-acid sequence, 334 residues long: Proline-serine-threonine phosphatase-interacting protein 2 (334 aa).

One can recognise an F-BAR domain in the interval Ser-4 to Asp-264. Positions Gly-66 to Asn-163 form a coiled coil. The disordered stretch occupies residues Tyr-288 to Asp-322. 2 positions are modified to phosphotyrosine: Tyr-323 and Tyr-329.

Phosphorylated on tyrosine. Expressed in macrophage-containing tissues, including bone marrow, spleen, liver, kidney, intestine and brain.

Its subcellular location is the cytoplasm. It is found in the membrane. Functionally, binds to F-actin. May be involved in regulation of the actin cytoskeleton. This is Proline-serine-threonine phosphatase-interacting protein 2 (Pstpip2) from Mus musculus (Mouse).